Here is a 437-residue protein sequence, read N- to C-terminus: tRNA modification GTPase MnmE (437 aa).

3 residues coordinate (6S)-5-formyl-5,6,7,8-tetrahydrofolate: Arg-21, Glu-79, and Arg-119. A TrmE-type G domain is found at 223-364 (GFRVVLAGPP…FRSALIAHAR (142 aa)). GTP contacts are provided by residues 233 to 238 (NAGKST), 252 to 258 (AAEPGTT), and 277 to 280 (DTAG). 2 residues coordinate Mg(2+): Ser-237 and Thr-258. Position 437 (Lys-437) interacts with (6S)-5-formyl-5,6,7,8-tetrahydrofolate.

This sequence belongs to the TRAFAC class TrmE-Era-EngA-EngB-Septin-like GTPase superfamily. TrmE GTPase family. Homodimer. Heterotetramer of two MnmE and two MnmG subunits. The cofactor is K(+).

The protein localises to the cytoplasm. Its function is as follows. Exhibits a very high intrinsic GTPase hydrolysis rate. Involved in the addition of a carboxymethylaminomethyl (cmnm) group at the wobble position (U34) of certain tRNAs, forming tRNA-cmnm(5)s(2)U34. The protein is tRNA modification GTPase MnmE of Novosphingobium aromaticivorans (strain ATCC 700278 / DSM 12444 / CCUG 56034 / CIP 105152 / NBRC 16084 / F199).